Reading from the N-terminus, the 313-residue chain is Olfactory receptor 4M1 (313 aa).

The Extracellular portion of the chain corresponds to 1–25 (MEPANDTTVTEFILTGLSQTREVQL). N-linked (GlcNAc...) asparagine glycosylation is present at Asn5. The chain crosses the membrane as a helical span at residues 26-46 (VLFVIFLSFYLFILPVNILII). The Cytoplasmic segment spans residues 47 to 57 (CTIRLDSHLSS). A helical membrane pass occupies residues 58-78 (PMYFLLANLAFLDIWYSSITA). The Extracellular segment spans residues 79–97 (PKMLVDFFVERKIISFGGC). Cys97 and Cys179 are disulfide-bonded. The helical transmembrane segment at 98–118 (IAQLFFLHFVGASEMFLLTVM) threads the bilayer. At 119–142 (AFDRYAAICRPLHYATIMNRRLCC) the chain is on the cytoplasmic side. Residues 143 to 163 (ILVALSWTGGFVHSIIQVALI) form a helical membrane-spanning segment. At 164–204 (VRLPFCGPNELDNYFCDITQVVRIACANTFLEEMVMIFSSG) the chain is on the extracellular side. Residues 205-225 (LISVVCFIALLMSYAFLLTML) traverse the membrane as a helical segment. The Cytoplasmic portion of the chain corresponds to 226 to 238 (KKHSSSGESTSRA). Residues 239-259 (ISTCYSHITIVVLMFGPSIYI) traverse the membrane as a helical segment. Residues 260 to 270 (YARPFDSFSLD) are Extracellular-facing. Residues 271–291 (KVVSVFHTVIFPLLNPIIYTL) form a helical membrane-spanning segment. Residues 292 to 313 (RNKEVKAAMRKLVNRYIFCKEK) lie on the Cytoplasmic side of the membrane.

Belongs to the G-protein coupled receptor 1 family. Highly expressed in liver but not in adipose tissue. Also expressed at high level in testis.

It is found in the cell membrane. Its function is as follows. Olfactory receptor that acts as a receptor of Asprosin hormone at the surface of hepatocytes to promote hepatocyte glucose release. Also binds Asprosin in the arcuate nucleus of the hypothalamus, thereby stimulating appetite by promoting orexigenic AgRP neuronal activity. In testis, Asprosin-binding promotes sperm progressive motility and enhances male fertility. The activity of this receptor is mediated by G proteins which activate adenylyl cyclase, resulting in an elevation of intracellular cAMP. This Mus musculus (Mouse) protein is Olfactory receptor 4M1.